We begin with the raw amino-acid sequence, 452 residues long: Pup--protein ligase (452 aa).

Glutamate 9 contributes to the Mg(2+) binding site. Arginine 53 serves as a coordination point for ATP. Tyrosine 55 contacts Mg(2+). Residue aspartate 57 is the Proton acceptor of the active site. Glutamate 63 is a Mg(2+) binding site. The ATP site is built by threonine 66 and tryptophan 419.

Belongs to the Pup ligase/Pup deamidase family. Pup-conjugating enzyme subfamily.

It catalyses the reaction ATP + [prokaryotic ubiquitin-like protein]-L-glutamate + [protein]-L-lysine = ADP + phosphate + N(6)-([prokaryotic ubiquitin-like protein]-gamma-L-glutamyl)-[protein]-L-lysine.. The protein operates within protein degradation; proteasomal Pup-dependent pathway. Its pathway is protein modification; protein pupylation. In terms of biological role, catalyzes the covalent attachment of the prokaryotic ubiquitin-like protein modifier Pup to the proteasomal substrate proteins, thereby targeting them for proteasomal degradation. This tagging system is termed pupylation. The ligation reaction involves the side-chain carboxylate of the C-terminal glutamate of Pup and the side-chain amino group of a substrate lysine. This Rhodococcus erythropolis (strain PR4 / NBRC 100887) protein is Pup--protein ligase.